Here is a 586-residue protein sequence, read N- to C-terminus: Tetratricopeptide repeat protein 39B (586 aa).

3 TPR repeats span residues 292-325, 483-516, and 524-557; these read SIIL…QQEW, CLVQ…EKRV, and PFTF…YKDY.

It belongs to the TTC39 family.

May be involved in lipid metabolism. The polypeptide is Tetratricopeptide repeat protein 39B (ttc39b) (Xenopus laevis (African clawed frog)).